We begin with the raw amino-acid sequence, 557 residues long: Dihydroxy-acid dehydratase (557 aa).

Residue C49 participates in [2Fe-2S] cluster binding. A Mg(2+)-binding site is contributed by D81. C122 serves as a coordination point for [2Fe-2S] cluster. D123 and K124 together coordinate Mg(2+). The residue at position 124 (K124) is an N6-carboxylysine. C194 is a [2Fe-2S] cluster binding site. Residue E446 participates in Mg(2+) binding. The Proton acceptor role is filled by S472.

The protein belongs to the IlvD/Edd family. Homodimer. [2Fe-2S] cluster serves as cofactor. It depends on Mg(2+) as a cofactor.

It catalyses the reaction (2R)-2,3-dihydroxy-3-methylbutanoate = 3-methyl-2-oxobutanoate + H2O. The enzyme catalyses (2R,3R)-2,3-dihydroxy-3-methylpentanoate = (S)-3-methyl-2-oxopentanoate + H2O. Its pathway is amino-acid biosynthesis; L-isoleucine biosynthesis; L-isoleucine from 2-oxobutanoate: step 3/4. The protein operates within amino-acid biosynthesis; L-valine biosynthesis; L-valine from pyruvate: step 3/4. In terms of biological role, functions in the biosynthesis of branched-chain amino acids. Catalyzes the dehydration of (2R,3R)-2,3-dihydroxy-3-methylpentanoate (2,3-dihydroxy-3-methylvalerate) into 2-oxo-3-methylpentanoate (2-oxo-3-methylvalerate) and of (2R)-2,3-dihydroxy-3-methylbutanoate (2,3-dihydroxyisovalerate) into 2-oxo-3-methylbutanoate (2-oxoisovalerate), the penultimate precursor to L-isoleucine and L-valine, respectively. This Prochlorococcus marinus (strain AS9601) protein is Dihydroxy-acid dehydratase.